The primary structure comprises 432 residues: Short/branched chain specific acyl-CoA dehydrogenase, mitochondrial (432 aa).

Residues 1–33 (MEGLAVRLLRGSRLLRRNFPTCLSSWKIPPHVS) constitute a mitochondrion transit peptide. At Lys70 the chain carries N6-acetyllysine; alternate. Lys70 carries the post-translational modification N6-succinyllysine; alternate. FAD-binding positions include 174–183 (FCLSEAGAGS) and 207–209 (WIS). Substrate is bound at residue Ser183. Ser183 carries the post-translational modification Phosphoserine. 2 residues coordinate substrate: Tyr229 and Tyr283. At Lys284 the chain carries N6-acetyllysine; alternate. Lys284 carries the N6-succinyllysine; alternate modification. Substrate is bound at residue 291–294 (NEGR). FAD-binding positions include Arg319, Gln330, and 387–391 (EWMGG). Glu414 serves as the catalytic Proton acceptor. 416–418 (ASN) is an FAD binding site. Lys426 is modified (N6-acetyllysine).

Belongs to the acyl-CoA dehydrogenase family. As to quaternary structure, homotetramer. FAD is required as a cofactor.

The protein resides in the mitochondrion matrix. The enzyme catalyses 2-methylbutanoyl-CoA + oxidized [electron-transfer flavoprotein] + H(+) = (2E)-2-methylbut-2-enoyl-CoA + reduced [electron-transfer flavoprotein]. The catalysed reaction is (2S)-2-methylbutanoyl-CoA + oxidized [electron-transfer flavoprotein] + H(+) = (2E)-2-methylbut-2-enoyl-CoA + reduced [electron-transfer flavoprotein]. It catalyses the reaction (2R)-2-methylbutanoyl-CoA + oxidized [electron-transfer flavoprotein] + H(+) = ethylacryloyl-CoA + reduced [electron-transfer flavoprotein]. It carries out the reaction butanoyl-CoA + oxidized [electron-transfer flavoprotein] + H(+) = (2E)-butenoyl-CoA + reduced [electron-transfer flavoprotein]. The enzyme catalyses 2-methylpropanoyl-CoA + oxidized [electron-transfer flavoprotein] + H(+) = 2-methylpropenoyl-CoA + reduced [electron-transfer flavoprotein]. The catalysed reaction is hexanoyl-CoA + oxidized [electron-transfer flavoprotein] + H(+) = (2E)-hexenoyl-CoA + reduced [electron-transfer flavoprotein]. It catalyses the reaction valproyl-CoA + oxidized [electron-transfer flavoprotein] + H(+) = (2E)-2-propylpent-2-enoyl-CoA + reduced [electron-transfer flavoprotein]. It functions in the pathway lipid metabolism; mitochondrial fatty acid beta-oxidation. Its pathway is amino-acid degradation; L-isoleucine degradation. Its function is as follows. Short and branched chain specific acyl-CoA dehydrogenase that catalyzes the removal of one hydrogen from C-2 and C-3 of the fatty acyl-CoA thioester, resulting in the formation of trans-2-enoyl-CoA. Among the different mitochondrial acyl-CoA dehydrogenases, acts specifically on short and branched chain acyl-CoA derivatives such as (S)-2-methylbutyryl-CoA as well as short straight chain acyl-CoAs such as butyryl-CoA. Plays an important role in the metabolism of L-isoleucine by catalyzing the dehydrogenation of 2-methylbutyryl-CoA, one of the steps of the L-isoleucine catabolic pathway. Can also act on valproyl-CoA, a metabolite of the valproic acid drug. This Pongo abelii (Sumatran orangutan) protein is Short/branched chain specific acyl-CoA dehydrogenase, mitochondrial (ACADSB).